A 126-amino-acid chain; its full sequence is Histone H2B type 1-K (126 aa).

Low complexity predominate over residues 1–12 (MPEPAKSAPAPK). The interval 1-36 (MPEPAKSAPAPKKGSKKAVTKAQKKDGKKRKRSRKE) is disordered. Residue proline 2 is modified to N-acetylproline. Glutamate 3 is modified (ADP-ribosyl glutamic acid). An N6-(2-hydroxyisobutyryl)lysine; alternate modification is found at lysine 6. Residue lysine 6 is modified to N6-(beta-hydroxybutyryl)lysine; alternate. Lysine 6 is modified (N6-acetyllysine; alternate). The residue at position 6 (lysine 6) is an N6-butyryllysine; alternate. Lysine 6 carries the N6-crotonyllysine; alternate modification. The residue at position 6 (lysine 6) is an N6-lactoyllysine; alternate. Lysine 6 participates in a covalent cross-link: Glycyl lysine isopeptide (Lys-Gly) (interchain with G-Cter in SUMO2); alternate. Serine 7 is modified (ADP-ribosylserine). Residue lysine 12 is modified to N6-(beta-hydroxybutyryl)lysine; alternate. Lysine 12 and lysine 13 each carry N6-acetyllysine; alternate. N6-crotonyllysine; alternate is present on residues lysine 12 and lysine 13. Lysine 12 carries the N6-lactoyllysine; alternate modification. An N6-(2-hydroxyisobutyryl)lysine; alternate modification is found at lysine 13. Phosphoserine; by STK4/MST1 is present on serine 15. 4 positions are modified to N6-acetyllysine; alternate: lysine 16, lysine 17, lysine 21, and lysine 24. N6-crotonyllysine; alternate is present on residues lysine 16, lysine 17, lysine 21, and lysine 24. Residues lysine 16, lysine 17, lysine 21, and lysine 24 each carry the N6-lactoyllysine; alternate modification. Lysine 17 carries the N6-glutaryllysine; alternate modification. Residues lysine 21 and lysine 24 each carry the N6-(2-hydroxyisobutyryl)lysine; alternate modification. Lysine 21 carries the post-translational modification N6-(beta-hydroxybutyryl)lysine; alternate. N6-butyryllysine; alternate is present on lysine 21. Lysine 21 is covalently cross-linked (Glycyl lysine isopeptide (Lys-Gly) (interchain with G-Cter in SUMO2); alternate). Position 25 is an N6-(2-hydroxyisobutyryl)lysine (lysine 25). Lysine 35 bears the N6-(2-hydroxyisobutyryl)lysine; alternate mark. The residue at position 35 (lysine 35) is an N6-(beta-hydroxybutyryl)lysine; alternate. N6-crotonyllysine; alternate is present on lysine 35. Lysine 35 is modified (N6-glutaryllysine; alternate). N6-succinyllysine; alternate is present on lysine 35. Residue lysine 35 forms a Glycyl lysine isopeptide (Lys-Gly) (interchain with G-Cter in ubiquitin); alternate linkage. A PolyADP-ribosyl glutamic acid modification is found at glutamate 36. Serine 37 carries the phosphoserine; by AMPK modification. Lysine 44, lysine 47, and lysine 58 each carry N6-(2-hydroxyisobutyryl)lysine; alternate. Lysine 44 carries the N6-lactoyllysine; alternate modification. N6-glutaryllysine; alternate is present on residues lysine 44 and lysine 47. Lysine 47 is subject to N6-methyllysine; alternate. N6,N6-dimethyllysine; alternate is present on lysine 58. The residue at position 80 (arginine 80) is a Dimethylated arginine. At lysine 86 the chain carries N6-(2-hydroxyisobutyryl)lysine; alternate. Lysine 86 bears the N6-acetyllysine; alternate mark. Lysine 86 carries the N6-lactoyllysine; alternate modification. An N6,N6,N6-trimethyllysine; alternate modification is found at lysine 86. Omega-N-methylarginine occurs at positions 87 and 93. The residue at position 109 (lysine 109) is an N6-(2-hydroxyisobutyryl)lysine; alternate. Lysine 109 is subject to N6-(beta-hydroxybutyryl)lysine; alternate. At lysine 109 the chain carries N6-lactoyllysine; alternate. At lysine 109 the chain carries N6-glutaryllysine; alternate. Lysine 109 is modified (N6-methyllysine; alternate). Serine 113 carries an O-linked (GlcNAc) serine glycan. Threonine 116 carries the phosphothreonine modification. N6-(2-hydroxyisobutyryl)lysine; alternate occurs at positions 117 and 121. Lysine 117 carries the N6-(beta-hydroxybutyryl)lysine; alternate modification. N6-lactoyllysine; alternate occurs at positions 117 and 121. 2 positions are modified to N6-glutaryllysine; alternate: lysine 117 and lysine 121. N6-succinyllysine; alternate is present on residues lysine 117 and lysine 121. Lysine 117 carries the post-translational modification N6-methylated lysine; alternate. A Glycyl lysine isopeptide (Lys-Gly) (interchain with G-Cter in ubiquitin); alternate cross-link involves residue lysine 121.

The protein belongs to the histone H2B family. The nucleosome is a histone octamer containing two molecules each of H2A, H2B, H3 and H4 assembled in one H3-H4 heterotetramer and two H2A-H2B heterodimers. The octamer wraps approximately 147 bp of DNA. In terms of processing, monoubiquitination at Lys-35 (H2BK34Ub) by the MSL1/MSL2 dimer is required for histone H3 'Lys-4' (H3K4me) and 'Lys-79' (H3K79me) methylation and transcription activation at specific gene loci, such as HOXA9 and MEIS1 loci. Similarly, monoubiquitination at Lys-121 (H2BK120Ub) by the RNF20/40 complex gives a specific tag for epigenetic transcriptional activation and is also prerequisite for histone H3 'Lys-4' and 'Lys-79' methylation. It also functions cooperatively with the FACT dimer to stimulate elongation by RNA polymerase II. H2BK120Ub also acts as a regulator of mRNA splicing: deubiquitination by USP49 is required for efficient cotranscriptional splicing of a large set of exons. Phosphorylated on Ser-15 (H2BS14ph) by STK4/MST1 during apoptosis; which facilitates apoptotic chromatin condensation. Also phosphorylated on Ser-15 in response to DNA double strand breaks (DSBs), and in correlation with somatic hypermutation and immunoglobulin class-switch recombination. Phosphorylation at Ser-37 (H2BS36ph) by AMPK in response to stress promotes transcription. Post-translationally, glcNAcylation at Ser-113 promotes monoubiquitination of Lys-121. It fluctuates in response to extracellular glucose, and associates with transcribed genes. In terms of processing, ADP-ribosylated by PARP1 or PARP2 on Ser-7 (H2BS6ADPr) in response to DNA damage. H2BS6ADPr promotes recruitment of CHD1L. Mono-ADP-ribosylated on Glu-3 (H2BE2ADPr) by PARP3 in response to single-strand breaks. Poly ADP-ribosylation on Glu-36 (H2BE35ADPr) by PARP1 regulates adipogenesis: it inhibits phosphorylation at Ser-37 (H2BS36ph), thereby blocking expression of pro-adipogenetic genes. Crotonylation (Kcr) is specifically present in male germ cells and marks testis-specific genes in post-meiotic cells, including X-linked genes that escape sex chromosome inactivation in haploid cells. Crotonylation marks active promoters and enhancers and confers resistance to transcriptional repressors. It is also associated with post-meiotically activated genes on autosomes. Post-translationally, hydroxybutyrylation of histones is induced by starvation. In terms of processing, lactylated in macrophages by EP300/P300 by using lactoyl-CoA directly derived from endogenous or exogenous lactate, leading to stimulates gene transcription.

It is found in the nucleus. The protein localises to the chromosome. Its function is as follows. Core component of nucleosome. Nucleosomes wrap and compact DNA into chromatin, limiting DNA accessibility to the cellular machineries which require DNA as a template. Histones thereby play a central role in transcription regulation, DNA repair, DNA replication and chromosomal stability. DNA accessibility is regulated via a complex set of post-translational modifications of histones, also called histone code, and nucleosome remodeling. The polypeptide is Histone H2B type 1-K (Mus musculus (Mouse)).